The primary structure comprises 387 residues: Phosphoglycerate kinase (387 aa).

Substrate-binding positions include 21-23, arginine 36, and 59-62; these read DLN and HLGR. The residue at position 84 (lysine 84) is an N6-acetyllysine. Substrate is bound by residues arginine 113 and arginine 146. ATP contacts are provided by residues lysine 197, glutamate 314, and 340-343; that span reads GGDT.

This sequence belongs to the phosphoglycerate kinase family. Monomer.

Its subcellular location is the cytoplasm. The catalysed reaction is (2R)-3-phosphoglycerate + ATP = (2R)-3-phospho-glyceroyl phosphate + ADP. The protein operates within carbohydrate degradation; glycolysis; pyruvate from D-glyceraldehyde 3-phosphate: step 2/5. This Escherichia coli O9:H4 (strain HS) protein is Phosphoglycerate kinase.